We begin with the raw amino-acid sequence, 206 residues long: Charged multivesicular body protein 2a homolog 1 (206 aa).

The interval 1–32 (MSFFGGNKKTPEQELKDSKRELSKGQREMDRE) is disordered. A compositionally biased stretch (basic and acidic residues) spans 9–32 (KTPEQELKDSKRELSKGQREMDRE). Coiled coils occupy residues 12 to 80 (EQEL…RATK) and 114 to 148 (NKQT…DMFE).

This sequence belongs to the SNF7 family. As to quaternary structure, probable core component of the endosomal sorting required for transport complex III (ESCRT-III). ESCRT-III components are thought to multimerize to form a flat lattice on the perimeter membrane of the endosome.

The protein resides in the endosome membrane. Functionally, probable core component of the endosomal sorting required for transport complex III (ESCRT-III) which is involved in multivesicular bodies (MVBs) formation and sorting of endosomal cargo proteins into MVBs. MVBs contain intraluminal vesicles (ILVs) that are generated by invagination and scission from the limiting membrane of the endosome and are delivered to lysosomes enabling degradation of membrane proteins. This chain is Charged multivesicular body protein 2a homolog 1 (chmp2a1), found in Dictyostelium discoideum (Social amoeba).